Reading from the N-terminus, the 478-residue chain is Growth/differentiation factor 10 (478 aa).

An N-terminal signal peptide occupies residues 1–33 (MAHVPARTSPGPGPQLLLLLLPLFLLLLRDVAG). Residues 34–368 (SHRAPAWSAL…EKTMQKARRK (335 aa)) constitute a propeptide that is removed on maturation. N-linked (GlcNAc...) asparagine glycans are attached at residues Asn118, Asn156, and Asn281. The disordered stretch occupies residues 266–319 (YDPFPAGDPEPRAAPNNSADPRVRRAAQATGPLQDNELPGLDERPPRAHAQHFH). Disulfide bonds link Cys376–Cys443, Cys405–Cys475, and Cys409–Cys477. Asn469 is a glycosylation site (N-linked (GlcNAc...) asparagine).

This sequence belongs to the TGF-beta family. Homodimer or heterodimer. Can form a non-covalent complex of the mature region and the pro-region. As to expression, expressed in femur, brain, lung, skeletal muscle, pancreas and testis.

It localises to the secreted. Its function is as follows. Growth factor involved in osteogenesis and adipogenesis. Plays an inhibitory role in the process of osteoblast differentiation via SMAD2/3 pathway. Plays an inhibitory role in the process of adipogenesis. In Homo sapiens (Human), this protein is Growth/differentiation factor 10.